The sequence spans 82 residues: Penaeidin-3b (82 aa).

Residues 1-19 form the signal peptide; that stretch reads MRLVVCLVFLASFALVCQG. The residue at position 20 (Q20) is a Pyrrolidone carboxylic acid. 3 disulfide bridges follow: C51–C66, C55–C73, and C67–C74. S81 is subject to Serine amide.

It belongs to the penaeidin family. In terms of tissue distribution, higher expression in hemocytes and to a lesser extent in heart, testis, gills, intestine, lymphoid organ and hepatopancreas. Traces in eyes and subcuticular epithelium. Not present in the brain.

The protein resides in the cytoplasmic granule. Its function is as follows. Antibacterial activity against M.luteus and E.coli bacteria. Antifungal activity against N.crassa and F.oxysporum. Presents chitin-binding activity. The protein is Penaeidin-3b of Penaeus vannamei (Whiteleg shrimp).